A 64-amino-acid polypeptide reads, in one-letter code: MRCVPVFVILLLLIASTPSVDARPNPKDDVPLASFHGADNANRILRTLWNLRGCCEDKTCCFIG.

Residues 1–22 (MRCVPVFVILLLLIASTPSVDA) form the signal peptide. Residues 23–52 (RPNPKDDVPLASFHGADNANRILRTLWNLR) constitute a propeptide that is removed on maturation. At isoleucine 63 the chain carries Isoleucine amide.

It belongs to the conotoxin T superfamily. In terms of processing, contains 2 disulfide bonds that can be either 'C1-C3, C2-C4' or 'C1-C4, C2-C3', since these disulfide connectivities have been observed for conotoxins with cysteine framework V (for examples, see AC P0DQQ7 and AC P81755). Expressed by the venom duct.

It localises to the secreted. The protein is Conotoxin Pu5.2 of Conus pulicarius (Flea-bitten cone).